A 1536-amino-acid polypeptide reads, in one-letter code: MQVSKYFTHQLSQFSGYPSIVSERDACGVGFIANLNSKPSNKIVTEALNALSCMEHRGGCGADNISGDGAGVTIQIPWDIFISEGINFLPKLQSNQSILNYGVRMILRSSDDLDKIKKIFSWALDEYQLDLISWRNVPVDKSILGEESKFNQPLVVQCIVRSNNLIDYKLDKHLYLVRKKIEKLVSKLDINTNKQFYICSFSSKTIVYKGMLRSEFLVKYYNDLSNSLYVSNFAMYHRRFSTNTMPKWSLAQPMRFMAHNGEINTLLGNLNWNKSKESLLKSSIWSDYYDILSPITNLENSDSANLDSVLELFIHSGRTPQEALMILIPEAYKNQPALSLFPEITDFYEYYSILQEPWDGPALVVFTDGKFVGATLDRNGLRPARYTITDDGFISLSSETGVSNINSQNVVTKGRLGPGQMLCVDLSKNLVLDNWMIKQQISQKFPYKEWVNKYQSNLNLLEYLNDFTFDKVQMNRWHTAFGYTNEDVELVIEHMASSAKEPTFSMGDDTPLPILSEKPHLIYDYFKQRFAQVTNPAIDPLRESLVMSLITYLGPKGNILEPTAIMAKSIKLESPIINENELAQLNSFNLSVVTVPTFIDKHLSTQTFVDKILEICSQCDSYISQGIEILVLSDRIEILPVDKIFVSPLLIVGAVHHYLIKKQLRHKVSLVIDTGQCWTTHHFALLIGYGASAICPYLAFLTVRQWWHNSRTQKLMSTGKLSRLTIQESQDNYRSAIEKGLLKILSKMGISLLSSYHGAQIFEILGLGQDVVDLAFSGTVSRLNGMTLNELYEDSLKSYNLAFITEIPKKLPNLGYVQYRPSAEYHVNNPEMSKTLHKAVRNNDNILYSKYKSLLNDRRPTNLRDLLELKTDRQPISIDQVEDVNSVLMRFCTGGMSLGALSRETHETLAIRMNRIGGKSNSGEGGEDSTRFKSIQDLDTSGVSRTFSHLKGLKINDLASSAIKQIASGRFGVTPEYLVNAKQLEIKIAQGAKPGEGGQLPGKKVSPYIAELRNCKPGVTLISPPPHHDIYSIEDLAQLIFDLHQINPDAQVSVKLVASLGIGTIAAGVAKGNADIIQISGHDGGTGASPLSSIKHAGAPWDVGLAEVHTTLVENSLREKVILRVDGGLRTGKDIIIAALMGAEEFGFGTVAMIATGCVMARVCHTNNCPVGVATQRQDLRNRFPGIPSDVVNFFIFVAEEVREILAELGYKSLEELIGLNDLFKVKDIELSKTKNLNLNILFNSINMNRNLIPKLKHKTVHTNGNVLDDILLSKSNIINAINLQSNIVQDIEILNTDRCVGARISGLITKMYGRDNFNGNLQLNFVGSAGQSFGAFISKGIHLYLKGEANDYVGKGMNGGEIIICPPIEQKTSSSNQVILGNTCLYGATGGYLFANGQAGERFAVRNSNGYSVVEGVGDHACEYMTGGLIVVLGTFGRNIGAGMTGGIAYFLDEDNTLKNKLNTEIVKAQRLLTKESEEQLKNIMELYEIKTKSEKAKLILDNWSQYLAKFYQIVPPSEQIQHLLMLIFFFSKYC.

C27 acts as the For GATase activity in catalysis. Residues 27–427 enclose the Glutamine amidotransferase type-2 domain; that stretch reads CGVGFIANLN…PGQMLCVDLS (401 aa). Position 1105-1162 (1105-1162) interacts with FMN; it reads LAEVHTTLVENSLREKVILRVDGGLRTGKDIIIAALMGAEEFGFGTVAMIATGCVMAR. 3 residues coordinate [3Fe-4S] cluster: C1158, C1164, and C1169.

The protein belongs to the glutamate synthase family. Monomer. The cofactor is [3Fe-4S] cluster. Requires FAD as cofactor. FMN serves as cofactor.

It localises to the plastid. The protein resides in the chloroplast stroma. The enzyme catalyses 2 oxidized [2Fe-2S]-[ferredoxin] + 2 L-glutamate = L-glutamine + 2 reduced [2Fe-2S]-[ferredoxin] + 2-oxoglutarate + 2 H(+). It participates in amino-acid biosynthesis; L-glutamate biosynthesis via GLT pathway; L-glutamate from 2-oxoglutarate and L-glutamine (ferredoxin route): step 1/1. It functions in the pathway energy metabolism; nitrogen metabolism. The protein is Ferredoxin-dependent glutamate synthase (gltB) of Antithamnion sp. (Red alga).